A 149-amino-acid polypeptide reads, in one-letter code: Large ribosomal subunit protein bL9 (149 aa).

This sequence belongs to the bacterial ribosomal protein bL9 family.

Binds to the 23S rRNA. The polypeptide is Large ribosomal subunit protein bL9 (Helicobacter pylori (strain J99 / ATCC 700824) (Campylobacter pylori J99)).